The primary structure comprises 371 residues: Phospho-N-acetylmuramoyl-pentapeptide-transferase (371 aa).

Helical transmembrane passes span 19–39 (LYWLLLLCLSGVALATDIYSG), 48–68 (IVAPLWTSTLVVTLLGFWAVP), 95–115 (TMGGIFFMPVALVLGWAWVAA), 119–139 (NLLEVSAAVLLTLCLGLVGWF), 155–175 (AKLRLGIELGSGLIFGLWLFL), 180–200 (ISGLALPFGLSLPIGVLFLAI), 227–247 (AIAFLGLALVVAPSWPGLMIF), 284–304 (AVGLITNTLWALLILSGLFLV), and 349–369 (VVSTFYACVAVLAVAACGLNA).

This sequence belongs to the glycosyltransferase 4 family. MraY subfamily. Requires Mg(2+) as cofactor.

The protein resides in the cell inner membrane. The enzyme catalyses UDP-N-acetyl-alpha-D-muramoyl-L-alanyl-gamma-D-glutamyl-meso-2,6-diaminopimeloyl-D-alanyl-D-alanine + di-trans,octa-cis-undecaprenyl phosphate = di-trans,octa-cis-undecaprenyl diphospho-N-acetyl-alpha-D-muramoyl-L-alanyl-D-glutamyl-meso-2,6-diaminopimeloyl-D-alanyl-D-alanine + UMP. The protein operates within cell wall biogenesis; peptidoglycan biosynthesis. Its function is as follows. Catalyzes the initial step of the lipid cycle reactions in the biosynthesis of the cell wall peptidoglycan: transfers peptidoglycan precursor phospho-MurNAc-pentapeptide from UDP-MurNAc-pentapeptide onto the lipid carrier undecaprenyl phosphate, yielding undecaprenyl-pyrophosphoryl-MurNAc-pentapeptide, known as lipid I. In Acaryochloris marina (strain MBIC 11017), this protein is Phospho-N-acetylmuramoyl-pentapeptide-transferase.